Consider the following 129-residue polypeptide: DNA-directed RNA polymerase II subunit RPB9 (129 aa).

Positions 21, 24, 43, 46, 90, 93, 118, and 123 each coordinate Zn(2+). The C4-type zinc-finger motif lies at Cys-21 to Cys-46. Residues Glu-86–Thr-128 form a TFIIS-type zinc finger.

The protein belongs to the archaeal RpoM/eukaryotic RPA12/RPB9/RPC11 RNA polymerase family. As to quaternary structure, component of the RNA polymerase II (Pol II) complex consisting of 12 subunits.

It is found in the nucleus. The protein resides in the nucleolus. DNA-dependent RNA polymerase catalyzes the transcription of DNA into RNA using the four ribonucleoside triphosphates as substrates. Component of RNA polymerase II which synthesizes mRNA precursors and many functional non-coding RNAs. Pol II is the central component of the basal RNA polymerase II transcription machinery. It is composed of mobile elements that move relative to each other. RPB9 is part of the upper jaw surrounding the central large cleft and thought to grab the incoming DNA template. This Drosophila melanogaster (Fruit fly) protein is DNA-directed RNA polymerase II subunit RPB9.